The following is a 431-amino-acid chain: Adenylosuccinate synthetase (431 aa).

Residues 13–19 (GDEGKGK) and 41–43 (GHT) each bind GTP. The active-site Proton acceptor is the D14. Mg(2+)-binding residues include D14 and G41. IMP-binding positions include 14 to 17 (DEGK), 39 to 42 (NAGH), T130, R144, Q225, T240, and R304. The Proton donor role is filled by H42. 300-306 (ATTGRAR) is a substrate binding site. GTP contacts are provided by residues R306, 332-334 (KLD), and 414-416 (STG).

This sequence belongs to the adenylosuccinate synthetase family. Homodimer. The cofactor is Mg(2+).

The protein resides in the cytoplasm. It carries out the reaction IMP + L-aspartate + GTP = N(6)-(1,2-dicarboxyethyl)-AMP + GDP + phosphate + 2 H(+). It functions in the pathway purine metabolism; AMP biosynthesis via de novo pathway; AMP from IMP: step 1/2. In terms of biological role, plays an important role in the de novo pathway of purine nucleotide biosynthesis. Catalyzes the first committed step in the biosynthesis of AMP from IMP. This Chromohalobacter salexigens (strain ATCC BAA-138 / DSM 3043 / CIP 106854 / NCIMB 13768 / 1H11) protein is Adenylosuccinate synthetase.